Here is an 88-residue protein sequence, read N- to C-terminus: Putative regulatory protein Npun_R3866 (88 aa).

The protein belongs to the RemA family.

In Nostoc punctiforme (strain ATCC 29133 / PCC 73102), this protein is Putative regulatory protein Npun_R3866.